The sequence spans 164 residues: Ribosome maturation factor RimP (164 aa).

It belongs to the RimP family.

The protein localises to the cytoplasm. Its function is as follows. Required for maturation of 30S ribosomal subunits. The protein is Ribosome maturation factor RimP of Mesoplasma florum (strain ATCC 33453 / NBRC 100688 / NCTC 11704 / L1) (Acholeplasma florum).